A 694-amino-acid polypeptide reads, in one-letter code: MIHRTNYQQLRIGLASPEQIRSWAERELPNGDVIGQVDQPYTLHYKTHKPERDGLFCERIFGPTKSGVCACGNCRSVNDEGESSRFCKHCGVEFTDSRVRRYRMGYIKLACPVTHVWFLKRIPSYIANLLAKPLKELESLVYCDLFLARPVAERPALLRLRGLFNYEDRAWRNILPTFFSTQNYEMLRKNEIVTGGDAIREGLASLDLQSFLNCAYLEWQASVKQKPVGIEWEDRTIRRRKDLLIRRIKLAKDFLRTNMKPEWMVLYFIPVLPPELRPIVELHEGELITSDLNELYRKIIYRNNTLREFLSGSEFTPEGLIVCQKRLVQEAVDALIGSGIRGQPMRDIHNRPYKSFSEVIEGKEGRFRENLLGKRVDYSGRSVIVVGPSLSLHQCGLPREMAIELFQAFVIRNLIGRHLACNLRAAKCMIRKGNPIIWEVLREVMRGHPVLLNRAPTLHRLGIQAFQPLLIEGRAIRLHPLVRGGFNADFDGDQMAVHVPLSVEAQIEARLLMFSHLNLLSPATGDPVSVPSQDMLLGLYALTIESRQGIYRNRHLGFIDRVNVYSTKLLHFSSYCDLLRAKESRQVDSHSLLWLRWKIDLQIISSKIRELSSESHYESSGTSFHFYENCRIRKCRDGSISSMYVLTTAGRILFNQQLKEAMQGVSKNSFSYTTSSTLSTSTIDRCNTNSNNEE.

4 residues coordinate Zn(2+): Cys-69, Cys-71, Cys-87, and Cys-90. Mg(2+) contacts are provided by Asp-489, Asp-491, and Asp-493.

Belongs to the RNA polymerase beta' chain family. RpoC1 subfamily. As to quaternary structure, in plastids the minimal PEP RNA polymerase catalytic core is composed of four subunits: alpha, beta, beta', and beta''. When a (nuclear-encoded) sigma factor is associated with the core the holoenzyme is formed, which can initiate transcription. Mg(2+) is required as a cofactor. The cofactor is Zn(2+).

The protein resides in the plastid. It localises to the chloroplast. It carries out the reaction RNA(n) + a ribonucleoside 5'-triphosphate = RNA(n+1) + diphosphate. Functionally, DNA-dependent RNA polymerase catalyzes the transcription of DNA into RNA using the four ribonucleoside triphosphates as substrates. In Adiantum capillus-veneris (Maidenhair fern), this protein is DNA-directed RNA polymerase subunit beta'.